A 109-amino-acid chain; its full sequence is Transcription initiation factor IIA subunit 2 (109 aa).

The protein belongs to the TFIIA subunit 2 family. TFIIA is a heterodimer composed of the large toa1 and the small toa2 subunits.

It localises to the nucleus. The protein resides in the cytoplasm. Its function is as follows. TFIIA is a component of the transcription machinery of RNA polymerase II and plays an important role in transcriptional activation. TFIIA in a complex with tbp mediates transcriptional activity. The polypeptide is Transcription initiation factor IIA subunit 2 (toa2) (Schizosaccharomyces pombe (strain 972 / ATCC 24843) (Fission yeast)).